Reading from the N-terminus, the 463-residue chain is tRNA (guanine(10)-N(2))-methyltransferase TRMT11 (463 aa).

At Ala-2 the chain carries N-acetylalanine.

This sequence belongs to the class I-like SAM-binding methyltransferase superfamily. TRM11 methyltransferase family. As to quaternary structure, part of the heterodimeric TRMT11-TRM112 methyltransferase complex; this complex forms an active tRNA methyltransferase, where TRMT112 acts as an activator of the catalytic subunit TRMT11.

It is found in the cytoplasm. The enzyme catalyses guanosine(10) in tRNA + S-adenosyl-L-methionine = N(2)-methylguanosine(10) in tRNA + S-adenosyl-L-homocysteine + H(+). Functionally, catalytic subunit of the TRMT11-TRM112 methyltransferase complex, that specifically mediates the S-adenosyl-L-methionine-dependent N(2)-methylation of guanosine nucleotide at position 10 (m2G10) in tRNAs. This is one of the major tRNA (guanine-N(2))-methyltransferases. This is tRNA (guanine(10)-N(2))-methyltransferase TRMT11 from Pongo abelii (Sumatran orangutan).